The following is a 934-amino-acid chain: Protocadherin gamma-C3 (934 aa).

The signal sequence occupies residues 1–31; the sequence is MVPEAWRSGLVSTGRVVGVLLLLGALNKAST. 6 consecutive Cadherin domains span residues 32 to 135, 136 to 244, 245 to 352, 353 to 457, 458 to 567, and 572 to 685; these read VIHY…NPAF, PTQE…APVF, NQSL…APEI, TVTS…PPQS, SQSS…APQV, and PGGS…APRE. Over 32–693 the chain is Extracellular; it reads VIHYEIPEER…REQKKNLTFY (662 aa). Asn-245, Asn-424, Asn-478, Asn-550, Asn-615, and Asn-689 each carry an N-linked (GlcNAc...) asparagine glycan. A helical transmembrane segment spans residues 694–714; that stretch reads LLLSLILVSVGFVVTVFGVII. Residues 715-934 lie on the Cytoplasmic side of the membrane; it reads FKVYKWKQSR…KKKSGKKEKK (220 aa). 2 disordered regions span residues 804-843 and 904-934; these read ESAP…WPNN and ATLT…KEKK. A compositionally biased stretch (polar residues) spans 812–843; sequence APPNTDWRFSQAQRPGTSGSQNGDDTGTWPNN. Residues 924 to 934 are compositionally biased toward basic residues; that stretch reads NKKKSGKKEKK.

The protein localises to the cell membrane. Its function is as follows. Potential calcium-dependent cell-adhesion protein. May be involved in the establishment and maintenance of specific neuronal connections in the brain. The sequence is that of Protocadherin gamma-C3 (PCDHGC3) from Homo sapiens (Human).